Reading from the N-terminus, the 225-residue chain is 2-C-methyl-D-erythritol 4-phosphate cytidylyltransferase (225 aa).

It belongs to the IspD/TarI cytidylyltransferase family. IspD subfamily.

The catalysed reaction is 2-C-methyl-D-erythritol 4-phosphate + CTP + H(+) = 4-CDP-2-C-methyl-D-erythritol + diphosphate. It participates in isoprenoid biosynthesis; isopentenyl diphosphate biosynthesis via DXP pathway; isopentenyl diphosphate from 1-deoxy-D-xylulose 5-phosphate: step 2/6. Its function is as follows. Catalyzes the formation of 4-diphosphocytidyl-2-C-methyl-D-erythritol from CTP and 2-C-methyl-D-erythritol 4-phosphate (MEP). This chain is 2-C-methyl-D-erythritol 4-phosphate cytidylyltransferase, found in Prochlorococcus marinus (strain MIT 9313).